A 203-amino-acid polypeptide reads, in one-letter code: Probable nicotinate-nucleotide adenylyltransferase (203 aa).

This sequence belongs to the NadD family.

It carries out the reaction nicotinate beta-D-ribonucleotide + ATP + H(+) = deamido-NAD(+) + diphosphate. Its pathway is cofactor biosynthesis; NAD(+) biosynthesis; deamido-NAD(+) from nicotinate D-ribonucleotide: step 1/1. Functionally, catalyzes the reversible adenylation of nicotinate mononucleotide (NaMN) to nicotinic acid adenine dinucleotide (NaAD). The sequence is that of Probable nicotinate-nucleotide adenylyltransferase from Dictyoglomus turgidum (strain DSM 6724 / Z-1310).